The chain runs to 471 residues: Ribulose bisphosphate carboxylase large chain (471 aa).

Substrate is bound by residues Asn115 and Thr165. The active-site Proton acceptor is Lys167. Lys169 is a binding site for substrate. Mg(2+)-binding residues include Lys193, Asp195, and Glu196. The residue at position 193 (Lys193) is an N6-carboxylysine. His286 serves as the catalytic Proton acceptor. Residues Arg287, His319, and Ser371 each coordinate substrate.

Belongs to the RuBisCO large chain family. Type I subfamily. Heterohexadecamer of 8 large chains and 8 small chains. Mg(2+) serves as cofactor.

It localises to the carboxysome. The catalysed reaction is 2 (2R)-3-phosphoglycerate + 2 H(+) = D-ribulose 1,5-bisphosphate + CO2 + H2O. It catalyses the reaction D-ribulose 1,5-bisphosphate + O2 = 2-phosphoglycolate + (2R)-3-phosphoglycerate + 2 H(+). In terms of biological role, ruBisCO catalyzes two reactions: the carboxylation of D-ribulose 1,5-bisphosphate, the primary event in carbon dioxide fixation, as well as the oxidative fragmentation of the pentose substrate in the photorespiration process. Both reactions occur simultaneously and in competition at the same active site. The protein is Ribulose bisphosphate carboxylase large chain of Prochlorococcus marinus (strain MIT 9515).